The chain runs to 449 residues: Phosphoribosylamine--glycine ligase (449 aa).

The 214-residue stretch at 112 to 325 (RELMEKYDIP…IVTLHASIAE (214 aa)) folds into the ATP-grasp domain. Residue 139–202 (IDELGKPVAV…EEKCVGEEYT (64 aa)) participates in ATP binding. Gln283, Glu295, and Asn297 together coordinate Mg(2+). The Mn(2+) site is built by Gln283, Glu295, and Asn297.

The protein belongs to the GARS family. It depends on Mg(2+) as a cofactor. Mn(2+) serves as cofactor.

The enzyme catalyses 5-phospho-beta-D-ribosylamine + glycine + ATP = N(1)-(5-phospho-beta-D-ribosyl)glycinamide + ADP + phosphate + H(+). The protein operates within purine metabolism; IMP biosynthesis via de novo pathway; N(1)-(5-phospho-D-ribosyl)glycinamide from 5-phospho-alpha-D-ribose 1-diphosphate: step 2/2. This is Phosphoribosylamine--glycine ligase from Methanopyrus kandleri (strain AV19 / DSM 6324 / JCM 9639 / NBRC 100938).